Here is a 478-residue protein sequence, read N- to C-terminus: tRNA modification GTPase MnmE (478 aa).

(6S)-5-formyl-5,6,7,8-tetrahydrofolate contacts are provided by arginine 36, glutamate 94, and lysine 133. The 173-residue stretch at 230–402 (GIHVVLAGRP…LVETLCAKVG (173 aa)) folds into the TrmE-type G domain. Asparagine 240 is a binding site for K(+). GTP contacts are provided by residues 240–245 (NAGKSS), 259–265 (TDVAGTT), and 284–287 (DTAG). Serine 244 is a Mg(2+) binding site. Threonine 259, valine 261, and threonine 264 together coordinate K(+). Threonine 265 contacts Mg(2+). Lysine 478 serves as a coordination point for (6S)-5-formyl-5,6,7,8-tetrahydrofolate.

Belongs to the TRAFAC class TrmE-Era-EngA-EngB-Septin-like GTPase superfamily. TrmE GTPase family. In terms of assembly, homodimer. Heterotetramer of two MnmE and two MnmG subunits. K(+) serves as cofactor.

It is found in the cytoplasm. Its function is as follows. Exhibits a very high intrinsic GTPase hydrolysis rate. Involved in the addition of a carboxymethylaminomethyl (cmnm) group at the wobble position (U34) of certain tRNAs, forming tRNA-cmnm(5)s(2)U34. In Psychrobacter cryohalolentis (strain ATCC BAA-1226 / DSM 17306 / VKM B-2378 / K5), this protein is tRNA modification GTPase MnmE.